A 379-amino-acid chain; its full sequence is F-box/kelch-repeat protein At4g33900 (379 aa).

Positions 9–55 (IKRFLMLPDDLVFNCLARVSRLHYPTLSLVSKKFRFLLASKELYQTR) constitute an F-box domain. 3 Kelch repeats span residues 116–175 (EIYA…TLDG), 176–222 (RIYV…LSIS), and 262–308 (SCCV…RNFK).

This Arabidopsis thaliana (Mouse-ear cress) protein is F-box/kelch-repeat protein At4g33900.